We begin with the raw amino-acid sequence, 556 residues long: Formate--tetrahydrofolate ligase 2 (556 aa).

An ATP-binding site is contributed by 65 to 72 (TPAGEGKS).

Belongs to the formate--tetrahydrofolate ligase family.

It carries out the reaction (6S)-5,6,7,8-tetrahydrofolate + formate + ATP = (6R)-10-formyltetrahydrofolate + ADP + phosphate. Its pathway is one-carbon metabolism; tetrahydrofolate interconversion. The polypeptide is Formate--tetrahydrofolate ligase 2 (Streptococcus sanguinis (strain SK36)).